Consider the following 585-residue polypeptide: Arginine--tRNA ligase (585 aa).

The short motif at 131–141 (ANPTGPMHVGH) is the 'HIGH' region element.

This sequence belongs to the class-I aminoacyl-tRNA synthetase family. In terms of assembly, monomer.

It is found in the cytoplasm. The enzyme catalyses tRNA(Arg) + L-arginine + ATP = L-arginyl-tRNA(Arg) + AMP + diphosphate. The chain is Arginine--tRNA ligase from Allorhizobium ampelinum (strain ATCC BAA-846 / DSM 112012 / S4) (Agrobacterium vitis (strain S4)).